A 153-amino-acid chain; its full sequence is UPF0179 protein AF_2154 (153 aa).

It belongs to the UPF0179 family.

In Archaeoglobus fulgidus (strain ATCC 49558 / DSM 4304 / JCM 9628 / NBRC 100126 / VC-16), this protein is UPF0179 protein AF_2154.